A 279-amino-acid chain; its full sequence is Lysozyme-like protein 2 (279 aa).

A signal peptide spans 1–19 (MIKLLVSFTILFVLSSARP). Positions 47-265 (MGNAVDFSFP…AAAPKTEVNM (219 aa)) constitute a Ch-type lysozyme domain.

The protein belongs to the glycosyl hydrolase 25 family. As to expression, expressed in intestine.

Functionally, involved in resistance to Gram-positive bacteria P.aeruginosa or B.thuringiensis infection. This chain is Lysozyme-like protein 2, found in Caenorhabditis elegans.